The chain runs to 458 residues: O-acetyltransferase dmxR13 (458 aa).

The segment at glutamate 211 to proline 231 is disordered. Pro residues predominate over residues proline 219–proline 231.

The protein belongs to the trichothecene 3-O-acetyltransferase family.

Its pathway is secondary metabolite biosynthesis. Functionally, O-acetyltransferase; part of the gene cluster that mediates the biosynthesis of the dimeric xanthones cryptosporioptides. The pathway begins with the synthesis of atrochrysone thioester by the polyketide synthase dmx-nrPKS. The atrochrysone carboxyl ACP thioesterase dmxR1 then breaks the thioester bond and releases the atrochrysone carboxylic acid from dmx-nrPKS. Atrochrysone carboxylic acid is decarboxylated by the decarboxylase dmxR15, and oxidized by the anthrone oxygenase dmxR16 to yield emodin. Emodin is then reduced to emodin hydroquinone by the oxidoreductase dmxR7. A-ring reduction by the short chain dehydrogenase dmxR18, dehydration by the scytalone dehydratase-like protein dmxR17 and probable spontaneous re-oxidation, results in overall deoxygenation to chrysophanol. Baeyer-Villiger oxidation by the Baeyer-Villiger monooxygenase (BVMO) dmxR6 then yields monodictylactone in equilibrium with monodictyphenone. In the case of the cryptosporioptides biosynthesis, monodictylactone is reduced at C-12 to an alcohol (by the short chain dehydrogenases dmxR12 or dmxR8) and hydroxylated at C-5 by dmxR9, yielding the electron-rich aromatic which could eliminate H(2)O to form the ortho-quinonemethide, followed by tautomerisation to paraquinone and complete the formal reduction to produce the 10-methylgroup. Conjugate addition of C-4a-OH to the resulting paraquinone by the monooxygenase dmxR10 then gives cyclohexadienone, which is then reduced at C-5 by the short chain dehydrogenase dmxR3 to give the dihydroxanthone. The 6,7-epoxide in the cryptosporioptides could be introduced by the cytochrome P450 monooxygenase dmxL3. The highly reducing PKS dmxL2 manufactures butyrate, which is further carboxylated by dmxL1 to form ethylmalonate. It is not yet clear whether the carboxylation occurs while the butyrate is attached to the ACP of dmxL2, but this unusual fungal metabolite could then be esterified to O-5 by the O-acetyltransferase dmxR13. Finally, dimerization performed by dmxR5 gives the observed dimers cryptosporioptides A, B and C as the final products of the pathway. This is O-acetyltransferase dmxR13 from Cryptosporiopsis sp. (strain 8999).